A 463-amino-acid chain; its full sequence is Phosphomethylpyrimidine synthase (463 aa).

Residues Asn-80, Met-109, Tyr-138, His-173, 193–195, 234–237, and Glu-273 contribute to the substrate site; these read SRG and DGLR. His-277 contacts Zn(2+). Tyr-300 provides a ligand contact to substrate. His-341 is a binding site for Zn(2+). 3 residues coordinate [4Fe-4S] cluster: Cys-421, Cys-424, and Cys-429.

Belongs to the ThiC family. In terms of assembly, homodimer. [4Fe-4S] cluster serves as cofactor.

It catalyses the reaction 5-amino-1-(5-phospho-beta-D-ribosyl)imidazole + S-adenosyl-L-methionine = 4-amino-2-methyl-5-(phosphooxymethyl)pyrimidine + CO + 5'-deoxyadenosine + formate + L-methionine + 3 H(+). Its pathway is cofactor biosynthesis; thiamine diphosphate biosynthesis. Its function is as follows. Catalyzes the synthesis of the hydroxymethylpyrimidine phosphate (HMP-P) moiety of thiamine from aminoimidazole ribotide (AIR) in a radical S-adenosyl-L-methionine (SAM)-dependent reaction. This Anaeromyxobacter sp. (strain K) protein is Phosphomethylpyrimidine synthase.